A 159-amino-acid polypeptide reads, in one-letter code: Transcription elongation factor GreA (159 aa).

The stretch at 2 to 77 (EENKEFLLTQ…LENMVRKAVI (76 aa)) forms a coiled coil.

It belongs to the GreA/GreB family.

In terms of biological role, necessary for efficient RNA polymerase transcription elongation past template-encoded arresting sites. The arresting sites in DNA have the property of trapping a certain fraction of elongating RNA polymerases that pass through, resulting in locked ternary complexes. Cleavage of the nascent transcript by cleavage factors such as GreA or GreB allows the resumption of elongation from the new 3'terminus. GreA releases sequences of 2 to 3 nucleotides. In Clostridioides difficile (strain 630) (Peptoclostridium difficile), this protein is Transcription elongation factor GreA.